Consider the following 636-residue polypeptide: DNA mismatch repair protein MutL (636 aa).

Positions 341 to 420 (APLINKPEQQ…PGAEEYTPEA (80 aa)) are disordered. A compositionally biased stretch (basic and acidic residues) spans 348–358 (EQQKLDFDQVR).

This sequence belongs to the DNA mismatch repair MutL/HexB family.

Its function is as follows. This protein is involved in the repair of mismatches in DNA. It is required for dam-dependent methyl-directed DNA mismatch repair. May act as a 'molecular matchmaker', a protein that promotes the formation of a stable complex between two or more DNA-binding proteins in an ATP-dependent manner without itself being part of a final effector complex. This chain is DNA mismatch repair protein MutL, found in Bacillus licheniformis (strain ATCC 14580 / DSM 13 / JCM 2505 / CCUG 7422 / NBRC 12200 / NCIMB 9375 / NCTC 10341 / NRRL NRS-1264 / Gibson 46).